The sequence spans 870 residues: Protein translocase subunit SecA (870 aa).

ATP contacts are provided by residues Q86, 104-108 (GEGKT), and D499. Residues C854, C856, C865, and H866 each contribute to the Zn(2+) site.

Belongs to the SecA family. Monomer and homodimer. Part of the essential Sec protein translocation apparatus which comprises SecA, SecYEG and auxiliary proteins SecDF-YajC and YidC. Zn(2+) serves as cofactor.

The protein resides in the cell inner membrane. It localises to the cytoplasm. It carries out the reaction ATP + H2O + cellular proteinSide 1 = ADP + phosphate + cellular proteinSide 2.. Its function is as follows. Part of the Sec protein translocase complex. Interacts with the SecYEG preprotein conducting channel. Has a central role in coupling the hydrolysis of ATP to the transfer of proteins into and across the cell membrane, serving both as a receptor for the preprotein-SecB complex and as an ATP-driven molecular motor driving the stepwise translocation of polypeptide chains across the membrane. The protein is Protein translocase subunit SecA of Ehrlichia ruminantium (strain Welgevonden).